A 178-amino-acid polypeptide reads, in one-letter code: Adenine phosphoribosyltransferase (178 aa).

The protein belongs to the purine/pyrimidine phosphoribosyltransferase family. Homodimer.

Its subcellular location is the cytoplasm. It carries out the reaction AMP + diphosphate = 5-phospho-alpha-D-ribose 1-diphosphate + adenine. The protein operates within purine metabolism; AMP biosynthesis via salvage pathway; AMP from adenine: step 1/1. Catalyzes a salvage reaction resulting in the formation of AMP, that is energically less costly than de novo synthesis. This Pseudoalteromonas atlantica (strain T6c / ATCC BAA-1087) protein is Adenine phosphoribosyltransferase.